A 469-amino-acid polypeptide reads, in one-letter code: Squamosa promoter-binding-like protein 3 (469 aa).

Residues 96–118 (SAEEHDKNMDKGKSKVDDTGTSR) form a disordered region. The span at 97–115 (AEEHDKNMDKGKSKVDDTG) shows a compositional bias: basic and acidic residues. The segment at 179–256 (NPHCQVEGCN…HDHNARRRKP (78 aa)) adopts an SBP-type zinc-finger fold. Zn(2+) is bound by residues C182, C187, C204, H207, C223, C226, H230, and C242. The Bipartite nuclear localization signal signature appears at 239 to 255 (KRSCRRRLHDHNARRRK). Positions 446–469 (NDDDEDHLQLPKPSYDNSHYDQMN) are disordered. Over residues 460-469 (YDNSHYDQMN) the composition is skewed to polar residues.

In terms of tissue distribution, ubiquitous.

It localises to the nucleus. In terms of biological role, trans-acting factor that binds specifically to the consensus nucleotide sequence 5'-TNCGTACAA-3'. May be involved in panicle development. This is Squamosa promoter-binding-like protein 3 (SPL3) from Oryza sativa subsp. indica (Rice).